Here is a 356-residue protein sequence, read N- to C-terminus: Metacaspase-1 (356 aa).

Positions 1 to 47 are disordered; the sequence is MYSGRSGAPPPAHSPYPNSYNHGPPGHSAGHNVPPPPPTQPVQFGHG. Catalysis depends on residues H147 and C203.

It belongs to the peptidase C14B family.

Functionally, involved in cell death (apoptosis). The polypeptide is Metacaspase-1 (MCA1) (Ajellomyces capsulatus (strain NAm1 / WU24) (Darling's disease fungus)).